We begin with the raw amino-acid sequence, 349 residues long: tRNA pseudouridine synthase D (349 aa).

F27 lines the substrate pocket. Residue D80 is the Nucleophile of the active site. N129 serves as a coordination point for substrate. Residues 155–303 (GVPNYFGAQR…VEAARRAMLL (149 aa)) form the TRUD domain. Substrate is bound at residue F329.

This sequence belongs to the pseudouridine synthase TruD family.

It catalyses the reaction uridine(13) in tRNA = pseudouridine(13) in tRNA. Responsible for synthesis of pseudouridine from uracil-13 in transfer RNAs. This is tRNA pseudouridine synthase D from Escherichia coli O8 (strain IAI1).